We begin with the raw amino-acid sequence, 122 residues long: Large ribosomal subunit protein uL14 (122 aa).

This sequence belongs to the universal ribosomal protein uL14 family. In terms of assembly, part of the 50S ribosomal subunit. Forms a cluster with proteins L3 and L19. In the 70S ribosome, L14 and L19 interact and together make contacts with the 16S rRNA in bridges B5 and B8.

Functionally, binds to 23S rRNA. Forms part of two intersubunit bridges in the 70S ribosome. This is Large ribosomal subunit protein uL14 from Ruthia magnifica subsp. Calyptogena magnifica.